The primary structure comprises 745 residues: Photosystem I P700 chlorophyll a apoprotein A2 (745 aa).

8 helical membrane-spanning segments follow: residues 49–72, 138–161, 178–202, 276–294, 338–361, 377–403, 425–447, and 528–546; these read LFATHFGHLAIIFLWASGNVFHIA, LYAGAIGLLLLAAVFLFAGWLHLQ, LNHHLAGLFGVSSLAWAGHLVHVAI, MAHHHLAIAVIFIVAGHMY, LHFQLALALACLGVVTSLVAQHMY, AALYTHHQYIAGFLMVGAFAHGAIFLV, AIISHLSWVSLFLGFHTLGLYVH, and FLVHHAIALGLHTTTLILV. 2 residues coordinate [4Fe-4S] cluster: C570 and C579. Transmembrane regions (helical) follow at residues 586–607 and 654–676; these read AFYLAMFWMLNTIGWVTFYWHW and LAVWAWMFLFGHLVWATGFMFLI. Positions 665, 673, and 681 each coordinate chlorophyll a. W682 contributes to the phylloquinone binding site. The helical transmembrane segment at 718 to 738 threads the bilayer; sequence LVGLAHFTVGYVLTYAAFVIA.

The protein belongs to the PsaA/PsaB family. In terms of assembly, the PsaA/B heterodimer binds the P700 chlorophyll special pair and subsequent electron acceptors. PSI consists of a core antenna complex that captures photons, and an electron transfer chain that converts photonic excitation into a charge separation. The cyanobacterial PSI reaction center is composed of one copy each of PsaA,B,C,D,E,F,I,J,K,L,M and X, and forms trimeric complexes. Requires PSI electron transfer chain: 5 chlorophyll a, 1 chlorophyll a', 2 phylloquinones and 3 4Fe-4S clusters. PSI core antenna: 90 chlorophyll a, 22 carotenoids, 3 phospholipids and 1 galactolipid. P700 is a chlorophyll a/chlorophyll a' dimer, A0 is one or more chlorophyll a, A1 is one or both phylloquinones and FX is a shared 4Fe-4S iron-sulfur center. as cofactor.

The protein resides in the cellular thylakoid membrane. The enzyme catalyses reduced [plastocyanin] + hnu + oxidized [2Fe-2S]-[ferredoxin] = oxidized [plastocyanin] + reduced [2Fe-2S]-[ferredoxin]. PsaA and PsaB bind P700, the primary electron donor of photosystem I (PSI), as well as the electron acceptors A0, A1 and FX. PSI is a plastocyanin/cytochrome c6-ferredoxin oxidoreductase, converting photonic excitation into a charge separation, which transfers an electron from the donor P700 chlorophyll pair to the spectroscopically characterized acceptors A0, A1, FX, FA and FB in turn. Oxidized P700 is reduced on the lumenal side of the thylakoid membrane by plastocyanin or cytochrome c6. This Synechococcus sp. (strain JA-3-3Ab) (Cyanobacteria bacterium Yellowstone A-Prime) protein is Photosystem I P700 chlorophyll a apoprotein A2.